The chain runs to 490 residues: ATP synthase subunit beta, chloroplastic (490 aa).

An ATP-binding site is contributed by G170–T177.

Belongs to the ATPase alpha/beta chains family. F-type ATPases have 2 components, CF(1) - the catalytic core - and CF(0) - the membrane proton channel. CF(1) has five subunits: alpha(3), beta(3), gamma(1), delta(1), epsilon(1). CF(0) has four main subunits: a(1), b(1), b'(1) and c(9-12).

It localises to the plastid. The protein resides in the chloroplast thylakoid membrane. It carries out the reaction ATP + H2O + 4 H(+)(in) = ADP + phosphate + 5 H(+)(out). In terms of biological role, produces ATP from ADP in the presence of a proton gradient across the membrane. The catalytic sites are hosted primarily by the beta subunits. The protein is ATP synthase subunit beta, chloroplastic of Calystegia sepium (Hedge bindweed).